An 89-amino-acid polypeptide reads, in one-letter code: Barrier-to-autointegration factor (89 aa).

Met-1 carries the post-translational modification N-acetylmethionine. At Thr-2 the chain carries N-acetylthreonine; in Barrier-to-autointegration factor, N-terminally processed. Phosphothreonine; by VRK1 and VRK2 is present on residues Thr-2 and Thr-3. Ser-4 is modified (phosphoserine; by VRK1 and VRK2). Positions Val-20–Glu-35 constitute a HhH domain.

Belongs to the BAF family. Homodimer. Heterodimerizes with BANF2. Interacts with ANKLE2/LEM4, leading to decreased phosphorylation by VRK1 and promoting dephosphorylation by protein phosphatase 2A (PP2A). Binds non-specifically to double-stranded DNA, and is found as a hexamer or dodecamer upon DNA binding. Binds to LEM domain-containing nuclear proteins such as LEMD3/MAN1, TMPO/LAP2 and EMD (emerin). Interacts with ANKLE1 (via LEM domain); the interaction may favor BANF1 dimerization. Interacts with CRX and LMNA (lamin-A). Binds linker histone H1.1 and core histones H3. Interacts with LEMD2 (via LEM domain). Interacts with PARP1; interaction takes place in response to oxidative DNA damage. Post-translationally, ser-4 is the major site of phosphorylation as compared to Thr-2 and Thr-3. Phosphorylation on Thr-2; Thr-3 and Ser-4 disrupts its ability to bind DNA and reduces its ability to bind LEM domain-containing proteins. Non phosphorylated BAF seems to enhance binding between EMD and LMNA. Dephosphorylated by protein phosphatase 2A (PP2A) following interaction with ANKLE2/LEM4 during mitotic exit, leading to mitotic nuclear envelope reassembly.

The protein localises to the nucleus. Its subcellular location is the chromosome. It is found in the nucleus envelope. It localises to the cytoplasm. Functionally, non-specific DNA-binding protein that plays key roles in mitotic nuclear reassembly, chromatin organization, DNA damage response, gene expression and intrinsic immunity against foreign DNA. Contains two non-specific double-stranded DNA (dsDNA)-binding sites which promote DNA cross-bridging. Plays a key role in nuclear membrane reformation at the end of mitosis by driving formation of a single nucleus in a spindle-independent manner. Transiently cross-bridges anaphase chromosomes via its ability to bridge distant DNA sites, leading to the formation of a dense chromatin network at the chromosome ensemble surface that limits membranes to the surface. Also acts as a negative regulator of innate immune activation by restricting CGAS activity toward self-DNA upon acute loss of nuclear membrane integrity. Outcompetes CGAS for DNA-binding, thereby preventing CGAS activation and subsequent damaging autoinflammatory responses. Also involved in DNA damage response: interacts with PARP1 in response to oxidative stress, thereby inhibiting the ADP-ribosyltransferase activity of PARP1. Involved in the recognition of exogenous dsDNA in the cytosol: associates with exogenous dsDNA immediately after its appearance in the cytosol at endosome breakdown and is required to avoid autophagy. In case of poxvirus infection, has an antiviral activity by blocking viral DNA replication. This chain is Barrier-to-autointegration factor (BANF1), found in Bos taurus (Bovine).